The primary structure comprises 435 residues: ATP-dependent protease ATPase subunit HslU (435 aa).

Residues isoleucine 18, 60 to 65 (GVGKTE), aspartate 248, glutamate 313, and arginine 385 contribute to the ATP site.

The protein belongs to the ClpX chaperone family. HslU subfamily. As to quaternary structure, a double ring-shaped homohexamer of HslV is capped on each side by a ring-shaped HslU homohexamer. The assembly of the HslU/HslV complex is dependent on binding of ATP.

The protein resides in the cytoplasm. Its function is as follows. ATPase subunit of a proteasome-like degradation complex; this subunit has chaperone activity. The binding of ATP and its subsequent hydrolysis by HslU are essential for unfolding of protein substrates subsequently hydrolyzed by HslV. HslU recognizes the N-terminal part of its protein substrates and unfolds these before they are guided to HslV for hydrolysis. In Rhizobium meliloti (strain 1021) (Ensifer meliloti), this protein is ATP-dependent protease ATPase subunit HslU.